Consider the following 324-residue polypeptide: MNETNHSRVTEFVLLGLSSSRELQPFLFLTFSLLYLAILLGNFLIILTVTSDSRLHTPMYFLLANLSFIDVCVASFATPKMIADFLVERKTISFDACLAQIFFVHLFTGSEMVLLVSMAYDRYVAICKPLHYMTVMSRRVCVVLVLISWFVGFIHTTSQLAFTVNLPFCGPNKVDSFFCDLPLVTKLACIDTYVVSLLIVADSGFLSLSSFLLLVVSYTVILVTVRNRSSASMAKARSTLTAHITVVTLFFGPCIFIYVWPFSSYSVDKVLAVFYTIFTLILNPVIYTLRNKEVKAAMSKLKSRYLKPSQVSVVIRNVLFLETK.

At methionine 1–proline 25 the chain is on the extracellular side. Residues asparagine 2 and asparagine 5 are each glycosylated (N-linked (GlcNAc...) asparagine). Residues phenylalanine 26–valine 49 form a helical membrane-spanning segment. Residues threonine 50 to threonine 57 are Cytoplasmic-facing. A helical transmembrane segment spans residues proline 58–proline 79. At lysine 80–glutamine 100 the chain is on the extracellular side. Cysteines 97 and 189 form a disulfide. Residues isoleucine 101 to tyrosine 120 form a helical membrane-spanning segment. The Cytoplasmic portion of the chain corresponds to aspartate 121–arginine 139. A helical membrane pass occupies residues valine 140 to serine 158. Residues glutamine 159–valine 195 are Extracellular-facing. A helical transmembrane segment spans residues serine 196–threonine 219. The Cytoplasmic portion of the chain corresponds to valine 220 to lysine 235. The chain crosses the membrane as a helical span at residues alanine 236 to tyrosine 258. Topologically, residues valine 259–lysine 269 are extracellular. Residues valine 270–leucine 289 form a helical membrane-spanning segment. Topologically, residues arginine 290–lysine 324 are cytoplasmic.

Belongs to the G-protein coupled receptor 1 family.

The protein resides in the cell membrane. Odorant receptor. The protein is Olfactory receptor 4K15 (OR4K15) of Homo sapiens (Human).